The chain runs to 88 residues: Conotoxin tx9a (88 aa).

Positions 1 to 27 (MHLSLARSAVLMLLLLFALGNFVVVQS) are cleaved as a signal peptide. A propeptide spanning residues 28–58 (GQITRDVDNGQLTDNRRNLQSKWKPVSLYMS) is cleaved from the precursor. Cystine bridges form between Cys-62/Cys-76, Cys-66/Cys-78, and Cys-72/Cys-83. 4-carboxyglutamate; partial is present on residues Glu-68 and Glu-73. Asn-87 is subject to Asparagine amide.

In terms of processing, exists in 4 different forms, depending on gamma-carboxyglutamations. Tx9a-EE does not contain gamma-carboxyglutamate, tx9a-E/gamma has one gamma-carboxyglutamate at position 73, tx9a-gamma/E has one gamma-carboxyglutamate at position 68, and tx9a-agmma/gamma has two gamma-carboxyglutamates at positions 68 and 73. In terms of tissue distribution, expressed by the venom duct. All different gamma-carboxyalted forms are mostly present in part 2, part 3 and part 4 of the venom duct. They are also found in part 1 (proximal part near the venom bulb) and part 5, but in lower quantity.

It is found in the secreted. Its function is as follows. Neurotoxin. In vivo, intracranial injection into mice of 10 pmol/g of the peptide induces running in circles and hyperactivity. At higher doses (50 pmol/g), the mice exhibit running and climbing symptoms for close to one hour. Between 130 and 150 pmol/g, characteristic 'spasmodic' symptomatology is elicited. A hand clap would make mice jump high and start running rapidly. When exposed to a loud hand clap, or if the cage cover were dropped, the mice lose motor control and exhibit seizure-like symptoms from which they eventually recover. At the highest doses tested (over 250 pmol/g), after the characteristic spasmodic symptomatology, lethality occurs. Injection of a similar dose range intramuscularly into Siamese fighting fish elicited no unusual symptomatology. The chain is Conotoxin tx9a from Conus textile (Cloth-of-gold cone).